Here is a 172-residue protein sequence, read N- to C-terminus: L-methionine sulfoximine/L-methionine sulfone acetyltransferase (172 aa).

The N-acetyltransferase domain maps to 3-166; the sequence is ASIRDAGVAD…DLTFMQLNLD (164 aa). Substrate-binding positions include 75–77 and 85–87; these read RPF and EHS. Acetyl-CoA contacts are provided by residues 88-90, 96-101, and asparagine 127; these read VYV and GKGLGV.

In terms of assembly, homodimer.

The catalysed reaction is L-methionine sulfoximine + acetyl-CoA = N-acetyl-L-methionine sulfoximine + CoA + H(+). It catalyses the reaction L-methionine sulfone + acetyl-CoA = N-acetyl-L-methionine sulfone + CoA + H(+). Functionally, plays a role in the resistance against the toxic effects of L-methionine sulfoximine (MSX), a rare amino acid, which inhibits glutamine synthetase (GlnA). Catalyzes the acetylation of L-methionine sulfoximine (MSX). The protein is L-methionine sulfoximine/L-methionine sulfone acetyltransferase of Pseudomonas aeruginosa (strain ATCC 15692 / DSM 22644 / CIP 104116 / JCM 14847 / LMG 12228 / 1C / PRS 101 / PAO1).